The primary structure comprises 570 residues: MALLAAATLNPTTHLSIRSRAGHNSENLWLRSAASSQKSKGRFCNLTVRAGTPSKPAEPIGPVFTKLKPWQIPKRDWFDKDFLFGASTSAYQIEGAWNEDGKGPSTWDHFCHTYPERISDRTNGDVAANSYHLYEEDVKALKDMGMKVYRFSISWSRILPNGTGKPNQKGIDYYNNLINSLIHHGIVPYVTIWHWDTPQALEDKYGGFLNRQIVNDYKHFAKVCFESFGDRVKNWFTFNEPHTYCCFSYGEGIHAPGRCSPGMDCAVPEGDSLREPYTAGHHILLAHAEAVELFKAHYNEHGDSKIGMAFDVMGYEPYQDSFLDDQARERSIDYNLGWFLEPVVRGDYPFSMRSLIGDRLPMFTKEEQEKLASSCDIMGLNYYTSRFSKHVDISSDFTPKLNTDDAYASSETKGSDGNDIGPITGTYWIYMYPKGLTDLLLIMKEKYGNPPIFITENGIADVDSDPTMTDPLDDWKRLDYLQRHISAVKDAIDQGADVRGHFTWGLIDNFEWSLGYSSRFGLVYIDKKDGNKRKLKKSAKWFAKFNSVPKALLKTTNTNNKPAVTASVSL.

The transit peptide at 1–50 (MALLAAATLNPTTHLSIRSRAGHNSENLWLRSAASSQKSKGRFCNLTVRA) directs the protein to the chloroplast. A beta-D-glucoside-binding positions include Gln-92, His-194, and 239–240 (NE). The active-site Proton donor is the Glu-240. Cysteines 259 and 265 form a disulfide. A beta-D-glucoside contacts are provided by residues Tyr-383, Glu-456, Trp-504, 511–512 (EW), and Phe-520. The Nucleophile role is filled by Glu-456.

The protein belongs to the glycosyl hydrolase 1 family. Homo- and heterohexamers. In terms of tissue distribution, expressed in young seedlings early after germination.

The protein localises to the plastid. It is found in the chloroplast. It carries out the reaction Hydrolysis of terminal, non-reducing beta-D-glucosyl residues with release of beta-D-glucose.. The catalysed reaction is DIMBOA beta-D-glucoside + H2O = DIMBOA + D-glucose. It catalyses the reaction DIBOA beta-D-glucoside + H2O = DIBOA + D-glucose. In terms of biological role, acts in defense of young plant parts against pests via the production of hydroxamic acids from hydroxamic acid glucosides. Enzymatic activity is highly correlated with plant growth. The preferred substrate is DIMBOA-beta-D-glucoside. The polypeptide is 4-hydroxy-7-methoxy-3-oxo-3,4-dihydro-2H-1,4-benzoxazin-2-yl glucoside beta-D-glucosidase 1c, chloroplastic (GLU1C) (Triticum aestivum (Wheat)).